A 260-amino-acid chain; its full sequence is Ubiquinone/menaquinone biosynthesis C-methyltransferase UbiE (260 aa).

S-adenosyl-L-methionine is bound by residues Thr83, Asp104, and 132–133 (NA).

The protein belongs to the class I-like SAM-binding methyltransferase superfamily. MenG/UbiE family.

It carries out the reaction a 2-demethylmenaquinol + S-adenosyl-L-methionine = a menaquinol + S-adenosyl-L-homocysteine + H(+). The catalysed reaction is a 2-methoxy-6-(all-trans-polyprenyl)benzene-1,4-diol + S-adenosyl-L-methionine = a 5-methoxy-2-methyl-3-(all-trans-polyprenyl)benzene-1,4-diol + S-adenosyl-L-homocysteine + H(+). It participates in quinol/quinone metabolism; menaquinone biosynthesis; menaquinol from 1,4-dihydroxy-2-naphthoate: step 2/2. The protein operates within cofactor biosynthesis; ubiquinone biosynthesis. Its function is as follows. Methyltransferase required for the conversion of demethylmenaquinol (DMKH2) to menaquinol (MKH2) and the conversion of 2-polyprenyl-6-methoxy-1,4-benzoquinol (DDMQH2) to 2-polyprenyl-3-methyl-6-methoxy-1,4-benzoquinol (DMQH2). The sequence is that of Ubiquinone/menaquinone biosynthesis C-methyltransferase UbiE from Bartonella quintana (strain Toulouse) (Rochalimaea quintana).